The primary structure comprises 370 residues: MEDLKVTPLRGVYEEYGGKIVDFAGYELPTQFKGFLHEHHTVREKAGLFDVSHMGEVMVTGKDAGKFIQYLMTNDINILKDNEVLYTFMCNEDGGVIDDLLVYKFAENEFFLVINASNKDKDVKWIMDHKGDFDVEIVDESDSIAQLALQGPLAEEILQKIVDIDLQEIKFFKLKRDVLVNGKKCLVSRTGYTGEDGFEIYCKPEDAKGLWHAILNAGKEEGVQPIGLGARDTLRFEASLLLYGNEMDETITPLEVGMGFFVKLKVEEDFIGKDALIKQKAEGVTRKLVGFELLDKGIPRHGYEVIKDGKVIGHVTTGYKSPTLNKAIGLALVEEQYSKIGTEFNIKVRKKELKAVAIDKRFYTKKTKTK.

This sequence belongs to the GcvT family. As to quaternary structure, the glycine cleavage system is composed of four proteins: P, T, L and H.

The catalysed reaction is N(6)-[(R)-S(8)-aminomethyldihydrolipoyl]-L-lysyl-[protein] + (6S)-5,6,7,8-tetrahydrofolate = N(6)-[(R)-dihydrolipoyl]-L-lysyl-[protein] + (6R)-5,10-methylene-5,6,7,8-tetrahydrofolate + NH4(+). Its function is as follows. The glycine cleavage system catalyzes the degradation of glycine. In Clostridium botulinum (strain Okra / Type B1), this protein is Aminomethyltransferase.